The following is a 184-amino-acid chain: Elongation factor P (184 aa).

The protein belongs to the elongation factor P family.

Its subcellular location is the cytoplasm. Its pathway is protein biosynthesis; polypeptide chain elongation. Involved in peptide bond synthesis. Stimulates efficient translation and peptide-bond synthesis on native or reconstituted 70S ribosomes in vitro. Probably functions indirectly by altering the affinity of the ribosome for aminoacyl-tRNA, thus increasing their reactivity as acceptors for peptidyl transferase. The polypeptide is Elongation factor P (Albidiferax ferrireducens (strain ATCC BAA-621 / DSM 15236 / T118) (Rhodoferax ferrireducens)).